The following is a 1132-amino-acid chain: BTB/POZ domain-containing protein 7 (1132 aa).

The segment covering 1 to 10 (MGANASNYPH) has biased composition (polar residues). Positions 1–24 (MGANASNYPHSCSPRVGGNSQAQQ) are disordered. G2 carries N-myristoyl glycine lipidation. 2 consecutive BTB domains span residues 142–211 (TDVD…GMED) and 247–341 (YDVV…DLSV). Residues 413–479 (YGSKWVHRQA…WGEHQLMKRI (67 aa)) form the BACK domain. S722 carries the post-translational modification Phosphoserine. Disordered regions lie at residues 897–1019 (LSQS…HLHR) and 1035–1132 (QRSD…KSAL). Positions 918 to 927 (RHTHTSRKKH) are enriched in basic residues. Composition is skewed to basic and acidic residues over residues 928 to 939 (TLEQKTDTRENP), 1000 to 1019 (KKQE…HLHR), 1083 to 1093 (PEERSGRRLAD), and 1105 to 1114 (TDLEREDSIS). Phosphoserine is present on S1012.

The protein resides in the nucleus. In terms of biological role, acts as a mediator of epithelial dynamics and organ branching by promoting cleft progression. Induced following accumulation of fibronectin in forming clefts, leading to local expression of the cell-scattering SNAIL2 and suppression of E-cadherin levels, thereby altering cell morphology and reducing cell-cell adhesion. This stimulates cell separation at the base of forming clefts by local, dynamic intercellular gap formation and promotes cleft progression. The protein is BTB/POZ domain-containing protein 7 (BTBD7) of Homo sapiens (Human).